Here is a 170-residue protein sequence, read N- to C-terminus: uncharacterized protein (170 aa).

This is an uncharacterized protein from Acidianus convivator (ATV).